Reading from the N-terminus, the 232-residue chain is MTNADPHELQKFSDLAHRWWDPNAEFKPLHDLNPVRLGWIDSHAHLAGKRALDIGCGGGILSESMAGLGAQVKGIDLSNEALGVADLHSLESGITVDYEAIAAEAIAEREPGSYDVVTCMEMLEHVPSPAGVVSACAKLVKPGGWVFFSTLNRNLKSYLFAVIGAEYIAQMLPKGTHDYARFIRPSELAGFVRATDLHIVELKGITYHPIGKRFALSNDTDINYLVACRRGA.

S-adenosyl-L-methionine contacts are provided by R36, G55, D76, and M120.

Belongs to the methyltransferase superfamily. UbiG/COQ3 family.

The enzyme catalyses a 3-demethylubiquinol + S-adenosyl-L-methionine = a ubiquinol + S-adenosyl-L-homocysteine + H(+). It carries out the reaction a 3-(all-trans-polyprenyl)benzene-1,2-diol + S-adenosyl-L-methionine = a 2-methoxy-6-(all-trans-polyprenyl)phenol + S-adenosyl-L-homocysteine + H(+). Its pathway is cofactor biosynthesis; ubiquinone biosynthesis. In terms of biological role, O-methyltransferase that catalyzes the 2 O-methylation steps in the ubiquinone biosynthetic pathway. The sequence is that of Ubiquinone biosynthesis O-methyltransferase from Burkholderia vietnamiensis (strain G4 / LMG 22486) (Burkholderia cepacia (strain R1808)).